Here is a 436-residue protein sequence, read N- to C-terminus: UPF0597 protein YhaM (436 aa).

The protein belongs to the UPF0597 family.

The chain is UPF0597 protein YhaM from Escherichia coli (strain K12 / MC4100 / BW2952).